The primary structure comprises 237 residues: Probable transcriptional regulatory protein PSHAa1370 (237 aa).

It belongs to the TACO1 family.

The protein localises to the cytoplasm. The protein is Probable transcriptional regulatory protein PSHAa1370 of Pseudoalteromonas translucida (strain TAC 125).